Consider the following 377-residue polypeptide: Ribosomal RNA large subunit methyltransferase G (377 aa).

Belongs to the methyltransferase superfamily. RlmG family.

It is found in the cytoplasm. It catalyses the reaction guanosine(1835) in 23S rRNA + S-adenosyl-L-methionine = N(2)-methylguanosine(1835) in 23S rRNA + S-adenosyl-L-homocysteine + H(+). Its function is as follows. Specifically methylates the guanine in position 1835 (m2G1835) of 23S rRNA. The protein is Ribosomal RNA large subunit methyltransferase G of Streptomyces coelicolor (strain ATCC BAA-471 / A3(2) / M145).